The primary structure comprises 332 residues: Ribosomal RNA small subunit methyltransferase C (332 aa).

The protein belongs to the methyltransferase superfamily. RsmC family. As to quaternary structure, monomer.

The protein localises to the cytoplasm. The enzyme catalyses guanosine(1207) in 16S rRNA + S-adenosyl-L-methionine = N(2)-methylguanosine(1207) in 16S rRNA + S-adenosyl-L-homocysteine + H(+). In terms of biological role, specifically methylates the guanine in position 1207 of 16S rRNA in the 30S particle. The polypeptide is Ribosomal RNA small subunit methyltransferase C (Pseudomonas entomophila (strain L48)).